Reading from the N-terminus, the 50-residue chain is Large ribosomal subunit protein bL33 (50 aa).

It belongs to the bacterial ribosomal protein bL33 family.

The chain is Large ribosomal subunit protein bL33 from Koribacter versatilis (strain Ellin345).